The following is a 460-amino-acid chain: MLDYMDYVQQCFDSAGRWKRQNSYGEVTQTPRNLIDFKIPDAVNLQVSNRSTKYSYNSLQLSTRQSINGSLTYLYTNLDAVEGLVKNTEELPLHDIVQTYELPAVTHHRKEKTNFHKCSLFYGKIFYPSSDVEAMMIKRFSPMNQVIVKCLSSLKENVNIFTAYFQRNSEKNFQELIVSSNDLLCGYRISHHFLRTPSKLNSSLYNNSSLFFGAEFWLGMISLNPGCSTSLKYCTHSANTGRPLTLTLSWNPLFGHISTTYSAMTSSSSTFCAKYDFNIYSIESNLSFGIELWRKTGALFKSEDSVEANRKEYEQNFYISHDHNLLPSKYGYDHEYNISDGKLSKEHKRNKIIKDLNHAFSTSLQKIDKEKTRIENFGNIIRNSHFTSVFKASTSLRERNLKFLWEGEYKNFLLSAGTELRVLKAEESELRRTSGQSSNSLLNEFSLQPLKFGVQIQFSS.

This sequence belongs to the MDM10 family. Component of the ER-mitochondria encounter structure (ERMES) or MDM complex, composed of MMM1, MDM10, MDM12 and MDM34. Associates with the mitochondrial outer membrane sorting assembly machinery SAM(core) complex.

Its subcellular location is the mitochondrion outer membrane. Its function is as follows. Component of the ERMES/MDM complex, which serves as a molecular tether to connect the endoplasmic reticulum and mitochondria. Components of this complex are involved in the control of mitochondrial shape and protein biogenesis and may function in phospholipid exchange. MDM10 is involved in the late assembly steps of the general translocase of the mitochondrial outer membrane (TOM complex). Functions in the TOM40-specific route of the assembly of outer membrane beta-barrel proteins, including the association of TOM40 with the receptor TOM22 and small TOM proteins. Can associate with the SAM(core) complex as well as the MDM12-MMM1 complex, both involved in late steps of the major beta-barrel assembly pathway, that is responsible for biogenesis of all outer membrane beta-barrel proteins. May act as a switch that shuttles between both complexes and channels precursor proteins into the TOM40-specific pathway. Plays a role in mitochondrial morphology and in the inheritance of mitochondria. The sequence is that of Mitochondrial distribution and morphology protein 10 from Candida glabrata (strain ATCC 2001 / BCRC 20586 / JCM 3761 / NBRC 0622 / NRRL Y-65 / CBS 138) (Yeast).